The chain runs to 273 residues: 4-hydroxy-tetrahydrodipicolinate reductase (273 aa).

NAD(+)-binding positions include 12 to 17 and Glu38; that span reads GAGGRM. Residue Arg39 coordinates NADP(+). NAD(+) is bound by residues 102 to 104 and 126 to 129; these read GTT and AANF. His159 serves as the catalytic Proton donor/acceptor. Position 160 (His160) interacts with (S)-2,3,4,5-tetrahydrodipicolinate. The active-site Proton donor is Lys163. 169-170 contributes to the (S)-2,3,4,5-tetrahydrodipicolinate binding site; the sequence is GT.

This sequence belongs to the DapB family. Homotetramer.

The protein resides in the cytoplasm. The catalysed reaction is (S)-2,3,4,5-tetrahydrodipicolinate + NAD(+) + H2O = (2S,4S)-4-hydroxy-2,3,4,5-tetrahydrodipicolinate + NADH + H(+). It carries out the reaction (S)-2,3,4,5-tetrahydrodipicolinate + NADP(+) + H2O = (2S,4S)-4-hydroxy-2,3,4,5-tetrahydrodipicolinate + NADPH + H(+). It participates in amino-acid biosynthesis; L-lysine biosynthesis via DAP pathway; (S)-tetrahydrodipicolinate from L-aspartate: step 4/4. Catalyzes the conversion of 4-hydroxy-tetrahydrodipicolinate (HTPA) to tetrahydrodipicolinate. In Yersinia pseudotuberculosis serotype O:1b (strain IP 31758), this protein is 4-hydroxy-tetrahydrodipicolinate reductase.